Here is a 463-residue protein sequence, read N- to C-terminus: Perilipin-5 (463 aa).

Residues 1–32 (MDQRGEDTTLAPHSRMSGDQTAQDPGSSLGEL) are disordered. The tract at residues 1-123 (MDQRGEDTTL…KLEEKLPFLQ (123 aa)) is interaction with LIPE. Positions 1 to 188 (MDQRGEDTTL…RFLPMTEAEL (188 aa)) are essential for lipid droplet targeting. 3 positions are modified to phosphoserine: Ser-17, Ser-163, and Ser-337. Polar residues predominate over residues 17-26 (SGDQTAQDPG). The segment at 200–463 (VGTVEEQRQQ…KHTMMPELDF (264 aa)) is interaction with PNPLA2 and ABHD5. The disordered stretch occupies residues 433–463 (AWEAESADPGGQEAEPPRGQGKHTMMPELDF). Residues 444 to 463 (QEAEPPRGQGKHTMMPELDF) form a necessary for mitochondria recruitment at the lipid droplet surface region.

Belongs to the perilipin family. As to quaternary structure, homooligomer. Interacts with PNPLA2; prevents interaction of PNPLA2 with ABHD5. Interacts with ABHD5; targets ABHD5 to lipid droplets and promotes interaction of ABHD5 with PNPLA2. Interacts with LIPE. Post-translationally, phosphorylated by PKA. Phosphorylated on serine in skeletal muscle at rest or with lipolytic stimulation. Highly expressed in oxidative tissues, including heart, liver, brown adipose tissue (BAT) and slow-twitch fibers of skeletal muscle. Lower expression in epididymal white adipose tissue and anterior tibialis and quadriceps. Expressed in adrenal glands. Isoform 2 has the highest expression in heart.

Its subcellular location is the lipid droplet. The protein resides in the cytoplasm. It is found in the mitochondrion. Lipid droplet-associated protein that maintains the balance between lipogenesis and lipolysis and also regulates fatty acid oxidation in oxidative tissues. Recruits mitochondria to the surface of lipid droplets and is involved in lipid droplet homeostasis by regulating both the storage of fatty acids in the form of triglycerides and the release of fatty acids for mitochondrial fatty acid oxidation. In lipid droplet triacylglycerol hydrolysis, plays a role as a scaffolding protein for three major key lipolytic players: ABHD5, PNPLA2 and LIPE. Reduces the triacylglycerol hydrolase activity of PNPLA2 by recruiting and sequestering PNPLA2 to lipid droplets. Phosphorylation by PKA enables lipolysis probably by promoting release of ABHD5 from the perilipin scaffold and by facilitating interaction of ABHD5 with PNPLA2. Also increases lipolysis through interaction with LIPE and upon PKA-mediated phosphorylation of LIPE. This Mus musculus (Mouse) protein is Perilipin-5 (Plin5).